We begin with the raw amino-acid sequence, 188 residues long: GMP synthase [glutamine-hydrolyzing] subunit A (188 aa).

Residues 2–188 form the Glutamine amidotransferase type-1 domain; the sequence is KVGLVYYGGQ…FKNFLGVCRK (187 aa). The Nucleophile role is filled by Cys-79. Residues His-166 and Glu-168 contribute to the active site.

As to quaternary structure, heterodimer composed of a glutamine amidotransferase subunit (A) and a GMP-binding subunit (B).

It catalyses the reaction XMP + L-glutamine + ATP + H2O = GMP + L-glutamate + AMP + diphosphate + 2 H(+). It participates in purine metabolism; GMP biosynthesis; GMP from XMP (L-Gln route): step 1/1. In terms of biological role, catalyzes the synthesis of GMP from XMP. In Saccharolobus solfataricus (strain ATCC 35092 / DSM 1617 / JCM 11322 / P2) (Sulfolobus solfataricus), this protein is GMP synthase [glutamine-hydrolyzing] subunit A.